The primary structure comprises 185 residues: Ribosome-recycling factor (185 aa).

Belongs to the RRF family.

The protein localises to the cytoplasm. In terms of biological role, responsible for the release of ribosomes from messenger RNA at the termination of protein biosynthesis. May increase the efficiency of translation by recycling ribosomes from one round of translation to another. The sequence is that of Ribosome-recycling factor from Mycobacterium avium (strain 104).